A 98-amino-acid chain; its full sequence is Transcription elongation factor A protein-like 7 (98 aa).

Basic and acidic residues predominate over residues 1 to 24 (MQRSCNEKEGKPKCSEPKREEEHP). A disordered region spans residues 1-31 (MQRSCNEKEGKPKCSEPKREEEHPYGAFEGQ). Residues 59–89 (GEEMTGEEEEMERCLEEIRSLRKKFRALHSN) adopt a coiled-coil conformation.

Belongs to the TFS-II family. TFA subfamily.

It localises to the nucleus. Functionally, plays a role in the negative regulation of NF-kappa-B signaling at the basal level by modulating transcriptional activity of NF-kappa-B on its target gene promoters. Associates with cyclin D1 promoter containing Myc E-box sequence and transcriptionally represses cyclin D1 expression. Regulates telomerase reverse transcriptase expression and telomerase activity in both ALT (alternative lengthening of telomeres)and telomerase-positive cell lines. This chain is Transcription elongation factor A protein-like 7 (Tceal7), found in Rattus norvegicus (Rat).